The primary structure comprises 776 residues: Zinc finger CCCH-type antiviral protein 1 (776 aa).

Ala2 carries the N-acetylalanine modification. The N-terminal domain stretch occupies residues 2–254 (ADPGVCCFIT…DRSKSRDRFL (253 aa)). Residues 69–76 (RARVCRRK) carry the Nuclear localization signal motif. 4 C3H1-type zinc fingers span residues 73–86 (CRRK…DSLH), 88–110 (CKLN…KYSH), 150–172 (CKSY…ERLH), and 169–193 (ERLH…SHNL). A disordered region spans residues 221-249 (NKHARRNPPGTRAAHPHRRGGAHRDRSKS). Residues 224-254 (ARRNPPGTRAAHPHRRGGAHRDRSKSRDRFL) form a binding to EXOSC5 region. Phosphoserine; by GSK3-beta occurs at positions 257, 262, 266, and 270. Phosphoserine is present on Ser274. Thr278 bears the Phosphothreonine mark. A Phosphoserine modification is found at Ser283. The short motif at 284-291 (LEDVSVDV) is the Nuclear export signal element. A disordered region spans residues 308–355 (PVSSKAAGVQGPSQMRASQEFSEDGNLDDIFSRNRSDSSSSRASAAKV). Over residues 318 to 327 (GPSQMRASQE) the composition is skewed to polar residues. Phosphoserine is present on residues Ser325, Ser351, and Ser398. Residues 344–353 (DSSSSRASAA) show a composition bias toward low complexity. A Nuclear localization signal motif is present at residues 405 to 406 (KK). A disordered region spans residues 457 to 483 (WASASTHNAPNGSSQIMDETPNVSKSS). Residues 459-483 (SASTHNAPNGSSQIMDETPNVSKSS) are compositionally biased toward polar residues. Tyr501 carries the phosphotyrosine modification. The disordered stretch occupies residues 512–562 (LAVPGEATTPVQSNRLPQSPLSSSSHRAAASGSPGKNSTHTSVSPAIESSR). A compositionally biased stretch (low complexity) spans 523–546 (QSNRLPQSPLSSSSHRAAASGSPG). Residues Ser544 and Ser667 each carry the phosphoserine modification. Residues 671 to 758 (YEEKPLSAVF…ASKTQRHVVR (88 aa)) enclose the WWE domain.

The protein belongs to the ARTD/PARP family. In terms of assembly, homodimer or homooligomer. Homooligomerization is essential for its antiviral activity. Interacts with EXOSC5. Interacts with EXOSC3, EXOSC7, DCP2 and DCP1A. Interacts with PARN in an RNA-independent manner. Interacts with XRN1 in an RNA-dependent manner. Interacts (via N-terminal domain) with DHX30 (via N-terminus) in an RNA-independent manner. Interacts (via N-terminal domain) with DDX17 in an RNA-independent manner. In terms of processing, phosphorylation at Ser-274 is essential for sequential phosphorylation of Ser-270, Ser-266, Ser-262 and Ser-257 by GSK3-beta. Phosphorylation by GSK3-beta enhances its antiviral activity. Expressed in the kidney and liver.

It localises to the cytoplasm. The protein resides in the nucleus. Its function is as follows. Antiviral protein which inhibits the replication of viruses by recruiting the cellular RNA degradation machineries to degrade the viral mRNAs. Binds to a ZAP-responsive element (ZRE) present in the target viral mRNA, recruits cellular poly(A)-specific ribonuclease PARN to remove the poly(A) tail, and the 3'-5' exoribonuclease complex exosome to degrade the RNA body from the 3'-end. It also recruits the decapping complex DCP1-DCP2 through RNA helicase p72 (DDX17) to remove the cap structure of the viral mRNA to initiate its degradation from the 5'-end. Its target viruses belong to families which include retroviridae: human immunodeficiency virus type 1 (HIV-1) and moloney and murine leukemia virus (MoMLV), filoviridae: ebola virus (EBOV) and marburg virus (MARV), togaviridae: sindbis virus (SINV) and Ross river virus (RRV). Specifically targets the multiply spliced but not unspliced or singly spliced HIV-1 mRNAs for degradation. In Rattus norvegicus (Rat), this protein is Zinc finger CCCH-type antiviral protein 1 (Zc3hav1).